A 146-amino-acid polypeptide reads, in one-letter code: uncharacterized protein (146 aa).

This is an uncharacterized protein from Arabidopsis thaliana (Mouse-ear cress).